A 396-amino-acid chain; its full sequence is RNA binding protein fox-1 homolog 1 (396 aa).

Positions 1–119 (MNCEREQLRG…ESKSQPKRLH (119 aa)) are disordered. Polar residues predominate over residues 67–86 (PPTQTHSEQSADTSAQTVSG). The segment covering 87-98 (TATQTDDAAPTD) has biased composition (low complexity). The segment covering 99–112 (GQPQTQPSENTESK) has biased composition (polar residues). One can recognise an RRM domain in the interval 116–192 (KRLHVSNIPF…RKIEVNNATA (77 aa)). 2 positions are modified to asymmetric dimethylarginine: R316 and A337. R387 bears the Omega-N-methylarginine mark.

Binds to the C-terminus of ATXN2. In terms of tissue distribution, detected in brain (at protein level). Detected in heart, brain, neurons, skeletal muscle and embryo.

It is found in the nucleus. It localises to the cytoplasm. Its function is as follows. RNA-binding protein that regulates alternative splicing events by binding to 5'-UGCAUGU-3' elements. Prevents binding of U2AF2 to the 3'-splice site. Regulates alternative splicing of tissue-specific exons and of differentially spliced exons during erythropoiesis. This Mus musculus (Mouse) protein is RNA binding protein fox-1 homolog 1 (Rbfox1).